Reading from the N-terminus, the 67-residue chain is Large ribosomal subunit protein uL29 (67 aa).

It belongs to the universal ribosomal protein uL29 family.

This chain is Large ribosomal subunit protein uL29, found in Alkaliphilus oremlandii (strain OhILAs) (Clostridium oremlandii (strain OhILAs)).